Consider the following 315-residue polypeptide: MKVSLIGAGNIGGTLAYLIASKKLASEVELIDVNGDLARGKALDVSQTLPLIGYTMKINGSANMERIKGSSVIIITAGIPRKPGMTREELIDVNAVVMKEVGEKIKKFAPKAFVIVVTNPLDVMVWVLYKAAEISPDKIVGMAGVLDASRMNLFLAQELGVSVADVKSLVLGSHGDSMVPLFRHSTVSGMSLPELVSVGLITKDKVDSIIERTRSGGAEIVALLKTGSAYYTPAASVLEMAEAYLLDQKKTLVCSVMMRGRYGVEDDIFSGIPVIMGSGGVERVIELDLTPDERRMFENSVAATRKLVLEARKYF.

NAD(+)-binding positions include 7–12 (GAGNIG) and Asp32. Residues Arg81 and Arg87 each contribute to the substrate site. Residues Asn94 and 117–119 (VTN) each bind NAD(+). Substrate is bound by residues Asn119 and Arg150. Catalysis depends on His174, which acts as the Proton acceptor.

This sequence belongs to the LDH/MDH superfamily. MDH type 3 family.

The catalysed reaction is (S)-malate + NAD(+) = oxaloacetate + NADH + H(+). In terms of biological role, catalyzes the reversible oxidation of malate to oxaloacetate. This chain is Malate dehydrogenase, found in Neorickettsia sennetsu (strain ATCC VR-367 / Miyayama) (Ehrlichia sennetsu).